The chain runs to 533 residues: RNA end formation protein 2 (533 aa).

Disordered stretches follow at residues 187–254, 260–279, and 321–344; these read SNST…SSMK, LFNK…SKKK, and SSST…PLKK. The segment covering 206 to 222 has biased composition (basic and acidic residues); it reads KIKDSEKEKEKEKDKSK. The segment covering 242–252 has biased composition (low complexity); that stretch reads SSPSPTASTSS. Low complexity predominate over residues 321 to 338; sequence SSSTSGSSTTTVATPASS.

In terms of assembly, interacts with FIR1. Component of the cleavage and polyadenylation factor (CPF) complex, which is composed of PTI1, SYC1, SSU72, GLC7, MPE1, REF2, PFS2, PTA1, YSH1/BRR5, SWD2, CFT2/YDH1, YTH1, CFT1/YHH1, FIP1 and PAP1. Component of the APT complex, which is a subcomplex of CPF, and is composed of PTI1, SYC1, SSU72, GLC7, REF2, PTA1 and SWD2.

Its subcellular location is the nucleus. Functionally, RNA-binding component of the cleavage and polyadenylation factor (CPF) complex, which plays a key role in polyadenylation-dependent pre-mRNA 3'-end formation and cooperates with cleavage factors including the CFIA complex and NAB4/CFIB. Negative regulator of poly(A) synthesis. Component of the APT complex, which may be involved in polyadenylation-independent transcript 3'-end formation. REF2 is required for 3'-end formation of snoRNAs. The polypeptide is RNA end formation protein 2 (REF2) (Saccharomyces cerevisiae (strain ATCC 204508 / S288c) (Baker's yeast)).